The sequence spans 187 residues: MSEEKQTVEQNETEEQEIIEEQAAADEQQEETNESELLQNQINELQGLLEEKENKLLRVQADFENYKRRSRLEMEASQKYRSQNIVTDLLPALDSFERALQVEADNEQTKSLLQGMEMVHRQLVEALKKEGVEAIEAVGQEFDPNLHQAVMQAEDENYGSNIVVEEMQKGYKLKDRVIRPSMVKVNQ.

The disordered stretch occupies residues 1–38; that stretch reads MSEEKQTVEQNETEEQEIIEEQAAADEQQEETNESELL. Positions 11–34 are enriched in acidic residues; that stretch reads NETEEQEIIEEQAAADEQQEETNE.

This sequence belongs to the GrpE family. Homodimer.

The protein resides in the cytoplasm. Its function is as follows. Participates actively in the response to hyperosmotic and heat shock by preventing the aggregation of stress-denatured proteins, in association with DnaK and GrpE. It is the nucleotide exchange factor for DnaK and may function as a thermosensor. Unfolded proteins bind initially to DnaJ; upon interaction with the DnaJ-bound protein, DnaK hydrolyzes its bound ATP, resulting in the formation of a stable complex. GrpE releases ADP from DnaK; ATP binding to DnaK triggers the release of the substrate protein, thus completing the reaction cycle. Several rounds of ATP-dependent interactions between DnaJ, DnaK and GrpE are required for fully efficient folding. The chain is Protein GrpE from Bacillus subtilis (strain 168).